The following is a 42-amino-acid chain: Cytochrome b559 subunit beta (42 aa).

Residues 17–33 (WLAIHAIGIPAVFFIGS) traverse the membrane as a helical segment. A heme-binding site is contributed by His-21.

It belongs to the PsbE/PsbF family. Heterodimer of an alpha subunit and a beta subunit. PSII is composed of 1 copy each of membrane proteins PsbA, PsbB, PsbC, PsbD, PsbE, PsbF, PsbH, PsbI, PsbJ, PsbK, PsbL, PsbM, PsbT, PsbX, PsbY, PsbZ, Psb30/Ycf12, at least 3 peripheral proteins of the oxygen-evolving complex and a large number of cofactors. It forms dimeric complexes. Heme b serves as cofactor.

The protein localises to the plastid. It localises to the cyanelle thylakoid membrane. In terms of biological role, this b-type cytochrome is tightly associated with the reaction center of photosystem II (PSII). PSII is a light-driven water:plastoquinone oxidoreductase that uses light energy to abstract electrons from H(2)O, generating O(2) and a proton gradient subsequently used for ATP formation. It consists of a core antenna complex that captures photons, and an electron transfer chain that converts photonic excitation into a charge separation. The polypeptide is Cytochrome b559 subunit beta (Cyanophora paradoxa).